A 231-amino-acid chain; its full sequence is Chalcone--flavanone isomerase (231 aa).

Residues Thr46, Asn111, and Ser188 each coordinate substrate.

This sequence belongs to the chalcone isomerase family. Pericarp.

It catalyses the reaction a chalcone = a flavanone.. It functions in the pathway secondary metabolite biosynthesis; flavonoid biosynthesis. Catalyzes the intramolecular cyclization of bicyclic chalcones into tricyclic (S)-flavanones. Responsible for the isomerization of 4,2',4',6'-tetrahydroxychalcone (also termed chalcone) into naringenin. This is Chalcone--flavanone isomerase (CHI) from Zea mays (Maize).